The sequence spans 101 residues: Small ribosomal subunit protein uS14 (101 aa).

This sequence belongs to the universal ribosomal protein uS14 family. In terms of assembly, part of the 30S ribosomal subunit. Contacts proteins S3 and S10.

Its function is as follows. Binds 16S rRNA, required for the assembly of 30S particles and may also be responsible for determining the conformation of the 16S rRNA at the A site. The sequence is that of Small ribosomal subunit protein uS14 from Aliivibrio fischeri (strain ATCC 700601 / ES114) (Vibrio fischeri).